A 106-amino-acid chain; its full sequence is UPF0060 membrane protein Mrad2831_0929 (106 aa).

The next 4 helical transmembrane spans lie at 3-23, 30-50, 59-79, and 87-104; these read LLAY…FWAW, AWWT…LTLV, FAAY…LAEG, and LAGS…LLGR.

The protein belongs to the UPF0060 family.

It is found in the cell inner membrane. The protein is UPF0060 membrane protein Mrad2831_0929 of Methylobacterium radiotolerans (strain ATCC 27329 / DSM 1819 / JCM 2831 / NBRC 15690 / NCIMB 10815 / 0-1).